The chain runs to 5088 residues: Replicase polyprotein 1ab (5088 aa).

The chain crosses the membrane as a helical span at residues 26–46; it reads VTNVIQYWTPILTMLLLAIYI. The tract at residues 301 to 323 is disordered; the sequence is EIEDDTEAEETQKTKRKGKLQPQ. The next 5 membrane-spanning stretches (helical) occupy residues 343 to 363, 1132 to 1152, 1156 to 1176, 1201 to 1221, and 1250 to 1270; these read HLTFGPAYMTMLCLISIMSPT, GLFLMLYIAALIIILAIAITI, TMMMFLKLITIFAYTFGHLLL, YGCLLMLGALAIAVIDLLAYI, and ILIPYIFTSYGLVLTIIVSYV. Catalysis depends on for 3C-like proteinase residues H1434 and C1539. Helical transmembrane passes span 1729 to 1749 and 1758 to 1778; these read FTHTHPAFYIAAACVFGLFFV and ILSSIIFAIPHIYVNYYYGLV. The disordered stretch occupies residues 3093–3112; sequence KPNCPMVPSEVPVRNKHKSA. The 266-residue stretch at 4351 to 4616 folds into the ExoN domain; that stretch reads MNIVMDDCIC…MTQCIYQSFV (266 aa). Catalysis depends on residues D4362, E4364, and D4481. C4498, C4504, C4522, and H4525 together coordinate Zn(2+). Active-site residues include H4599, D4604, K4880, D4969, K4998, and E5035. Residues 4844-5088 form the Nidovirus-type SAM-dependent 2'-O-MTase domain; the sequence is LNNHAALAKA…RQSVFRYSPK (245 aa).

In terms of assembly, homodimer. Post-translationally, specific enzymatic cleavages in vivo by its own protease yield mature proteins. 3CL-PRO is autocatalytically processed.

The protein localises to the membrane. It catalyses the reaction a 5'-end (5'-triphosphoguanosine)-ribonucleoside in mRNA + S-adenosyl-L-methionine = a 5'-end (N(7)-methyl 5'-triphosphoguanosine)-ribonucleoside in mRNA + S-adenosyl-L-homocysteine. It carries out the reaction RNA(n) + a ribonucleoside 5'-triphosphate = RNA(n+1) + diphosphate. The enzyme catalyses ATP + H2O = ADP + phosphate + H(+). The catalysed reaction is a 5'-end (N(7)-methyl 5'-triphosphoguanosine)-ribonucleoside in mRNA + S-adenosyl-L-methionine = a 5'-end (N(7)-methyl 5'-triphosphoguanosine)-(2'-O-methyl-ribonucleoside) in mRNA + S-adenosyl-L-homocysteine + H(+). Functionally, cysteine protease responsible for the majority of cleavages of the polyprotein. Recognizes substrates containing the core sequence [NT]-[EHKQSY]-|-[AGNST]. In terms of biological role, the helicase which contains a zinc finger structure displays RNA and DNA duplex-unwinding activities with 5' to 3' polarity. Its function is as follows. RNA-directed RNA polymerase that catalyzes the transcription of viral genomic and subgenomic RNAs. Catalyzes the RNA N7-guanylyltransferase reaction to methylate the core cap structure GpppN-RNA into the type-0 cap (m)GpppN-RNA. The sequence is that of Replicase polyprotein 1ab from Ochlerotatus harrisoni (CAVV).